The following is a 500-amino-acid chain: E3 ubiquitin-protein ligase TRIM69 (500 aa).

Residues 1–152 (MEVSTNPSSN…SVGQSKEFLQ (152 aa)) are necessary for nuclear localization. Residues 41–82 (CPLCNDWFRDPLMLSCGHNFCEACIQDFWRLQAKETFCPECK) form an RING-type zinc finger. The stretch at 161–255 (TEELAIQQGQ…QCLLAKDMLV (95 aa)) forms a coiled coil. The B30.2/SPRY domain occupies 305–500 (PIQYMVWREM…KEPLHILHPQ (196 aa)). Ser-341 is modified (phosphoserine).

Belongs to the TRIM/RBCC family. As to quaternary structure, homo-multimer; required for antiviral activity. Interacts with PML. Post-translationally, phosphorylated. Phosphorylation is necessary for nuclear localization.

The protein resides in the cytoplasm. It is found in the nucleus. It localises to the nucleus speckle. The protein localises to the cytoskeleton. Its subcellular location is the microtubule organizing center. The protein resides in the centrosome. The enzyme catalyses S-ubiquitinyl-[E2 ubiquitin-conjugating enzyme]-L-cysteine + [acceptor protein]-L-lysine = [E2 ubiquitin-conjugating enzyme]-L-cysteine + N(6)-ubiquitinyl-[acceptor protein]-L-lysine.. It participates in protein modification; protein ubiquitination. E3 ubiquitin ligase that plays an important role in antiviral immunity by restricting different viral infections including dengue virus or vesicular stomatitis indiana virus. Ubiquitinates viral proteins such as dengue virus NS3 thereby limiting infection. In addition, acts as a key mediator of type I interferon induced microtubule stabilization by directly associating to microtubules independently of its E3 ligase activity. Also plays a role in cataract formation together with TP53. Mechanistically, inhibits UVB-induced cell apoptosis and reactive oxygen species (ROS) production by inducing TP53 ubiquitination. Regulates centrosome dynamics and mitotic progression by ubiquitinating STK3/MST2; leading to its redistribution to the perinuclear cytoskeleton and subsequent phosphorylation by PLK1. This is E3 ubiquitin-protein ligase TRIM69 (TRIM69) from Homo sapiens (Human).